We begin with the raw amino-acid sequence, 902 residues long: Glutamate receptor 4 (902 aa).

Positions 1–20 (MRIISRQIVLLFSGFWGLAM) are cleaved as a signal peptide. Residues 22–544 (AFPSSVQIGG…GVFSFLDPLA (523 aa)) lie on the Extracellular side of the membrane. N-linked (GlcNAc...) asparagine glycans are attached at residues Asn52, Asn56, Asn258, Asn371, Asn407, and Asn414. Cys84 and Cys331 are disulfide-bonded. The L-glutamate site is built by Pro500, Thr502, and Arg507. A helical transmembrane segment spans residues 545-565 (YEIWMCIVFAYIGVSVVLFLV). Topologically, residues 566 to 592 (SRFSPYEWHTEEPEDGKEGPSDQPPNE) are cytoplasmic. An intramembrane region (helical; Pore-forming) is located at residues 593–608 (FGIFNSLWFSLGAFMQ). An intramembrane segment occupies 609-611 (QGC). Cys611 carries the S-palmitoyl cysteine lipid modification. Residues 612–617 (DISPRS) are Cytoplasmic-facing. A helical membrane pass occupies residues 618–638 (LSGRIVGGVWWFFTLIIISSY). Over 639-813 (TANLAAFLTV…DKTSALSLSN (175 aa)) the chain is Extracellular. L-glutamate is bound by residues Ser676, Thr677, and Glu727. An intrachain disulfide couples Cys740 to Cys795. The helical transmembrane segment at 814–834 (VAGVFYILVGGLGLAMLVALI) threads the bilayer. Residues 835-902 (EFCYKSRAEA…GLAVIASDLP (68 aa)) lie on the Cytoplasmic side of the membrane. Cys837 carries the S-palmitoyl cysteine lipid modification. Phosphoserine; by PKC/PRKCG is present on Ser862.

It belongs to the glutamate-gated ion channel (TC 1.A.10.1) family. GRIA4 subfamily. As to quaternary structure, homotetramer or heterotetramer of pore-forming glutamate receptor subunits. Tetramers may be formed by the dimerization of dimers. Interacts with EPB41L1 via its C-terminus. Isoform 3 interacts with PICK1. Found in a complex with GRIA1, GRIA2, GRIA3, CNIH2, CNIH3, CACNG2, CACNG3, CACNG4, CACNG5, CACNG7 and CACNG8. Interacts with CACNG5 and PRKCG. Found in a complex with GRIA1, GRIA2, GRIA3, DLG4, CACNG8 and CNIH2. In terms of processing, palmitoylated. Depalmitoylated upon L-glutamate stimulation. ZDHHC3/GODZ specifically palmitoylates Cys-611, which leads to Golgi retention and decreased cell surface expression. In contrast, Cys-837 palmitoylation does not affect cell surface expression but regulates stimulation-dependent endocytosis. Phosphorylated at Ser-862 by PRKCG; phosphorylation increases plasma membrane-associated GRI4 expression.

The protein localises to the cell membrane. The protein resides in the postsynaptic cell membrane. It is found in the cell projection. It localises to the dendrite. It carries out the reaction Ca(2+)(in) = Ca(2+)(out). It catalyses the reaction Na(+)(in) = Na(+)(out). The catalysed reaction is Mg(2+)(in) = Mg(2+)(out). Its function is as follows. Ionotropic glutamate receptor that functions as a ligand-gated cation channel, gated by L-glutamate and glutamatergic agonists such as alpha-amino-3-hydroxy-5-methyl-4-isoxazolepropionic acid (AMPA), quisqualic acid, and kainic acid. L-glutamate acts as an excitatory neurotransmitter at many synapses in the central nervous system and plays an important role in fast excitatory synaptic transmission. Binding of the excitatory neurotransmitter L-glutamate induces a conformation change, leading to the opening of the cation channel, and thereby converts the chemical signal to an electrical impulse upon entry of monovalent and divalent cations such as sodium and calcium. The receptor then desensitizes rapidly and enters a transient inactive state, characterized by the presence of bound agonist. In the presence of CACNG8, shows resensitization which is characterized by a delayed accumulation of current flux upon continued application of L-glutamate. The sequence is that of Glutamate receptor 4 from Macaca fascicularis (Crab-eating macaque).